A 349-amino-acid polypeptide reads, in one-letter code: Protein FAM98C (349 aa).

Positions 313-349 are disordered; it reads PDRGGRPNELEPPMPTWRSRREDGGPQCWGRKKKKKK.

Belongs to the FAM98 family.

The sequence is that of Protein FAM98C (FAM98C) from Homo sapiens (Human).